Reading from the N-terminus, the 256-residue chain is Hydroxyethylthiazole kinase (256 aa).

Methionine 38 serves as a coordination point for substrate. Positions 114 and 159 each coordinate ATP. Glycine 186 lines the substrate pocket.

This sequence belongs to the Thz kinase family. Mg(2+) is required as a cofactor.

The enzyme catalyses 5-(2-hydroxyethyl)-4-methylthiazole + ATP = 4-methyl-5-(2-phosphooxyethyl)-thiazole + ADP + H(+). It functions in the pathway cofactor biosynthesis; thiamine diphosphate biosynthesis; 4-methyl-5-(2-phosphoethyl)-thiazole from 5-(2-hydroxyethyl)-4-methylthiazole: step 1/1. Its function is as follows. Catalyzes the phosphorylation of the hydroxyl group of 4-methyl-5-beta-hydroxyethylthiazole (THZ). This chain is Hydroxyethylthiazole kinase, found in Streptococcus agalactiae serotype Ia (strain ATCC 27591 / A909 / CDC SS700).